The following is a 171-amino-acid chain: MDYFTLFGLPASYTLSLEQLAVRYQDLQRQYHPDKFASAPAAEQLAAVQHSATINQAWQTLRHPLTRAEYLLSLHGFDLASEQHTVRDTAFLMEQLELREELDEIGQAKDDARLEGFIKRVKALFDTRQQLMVDQLHNESWEAAADTVRKLRFLDKLRSSAEELEEKLLDF.

Residues 2–74 (DYFTLFGLPA…LTRAEYLLSL (73 aa)) form the J domain.

This sequence belongs to the HscB family. As to quaternary structure, interacts with HscA and stimulates its ATPase activity. Interacts with IscU.

Co-chaperone involved in the maturation of iron-sulfur cluster-containing proteins. Seems to help targeting proteins to be folded toward HscA. This is Co-chaperone protein HscB from Klebsiella pneumoniae subsp. pneumoniae (strain ATCC 700721 / MGH 78578).